The following is an 89-amino-acid chain: MALTKEEKKQIIEKFRLNENDSGSPEVQIALLTERIKRLTEHLKVHKKDYHSRVGLLKMIGRRRKLLKYLQEKDFERYKKLIQELGLRK.

The protein belongs to the universal ribosomal protein uS15 family. Part of the 30S ribosomal subunit. Forms a bridge to the 50S subunit in the 70S ribosome, contacting the 23S rRNA.

Its function is as follows. One of the primary rRNA binding proteins, it binds directly to 16S rRNA where it helps nucleate assembly of the platform of the 30S subunit by binding and bridging several RNA helices of the 16S rRNA. Forms an intersubunit bridge (bridge B4) with the 23S rRNA of the 50S subunit in the ribosome. The chain is Small ribosomal subunit protein uS15 from Dictyoglomus thermophilum (strain ATCC 35947 / DSM 3960 / H-6-12).